The primary structure comprises 342 residues: RNA 3'-terminal phosphate cyclase (342 aa).

Residues Q100 and 283 to 287 contribute to the ATP site; that span reads FLGDQ. The active-site Tele-AMP-histidine intermediate is H307.

This sequence belongs to the RNA 3'-terminal cyclase family. Type 1 subfamily.

It localises to the cytoplasm. It catalyses the reaction a 3'-end 3'-phospho-ribonucleotide-RNA + ATP = a 3'-end 2',3'-cyclophospho-ribonucleotide-RNA + AMP + diphosphate. Functionally, catalyzes the conversion of 3'-phosphate to a 2',3'-cyclic phosphodiester at the end of RNA. The mechanism of action of the enzyme occurs in 3 steps: (A) adenylation of the enzyme by ATP; (B) transfer of adenylate to an RNA-N3'P to produce RNA-N3'PP5'A; (C) and attack of the adjacent 2'-hydroxyl on the 3'-phosphorus in the diester linkage to produce the cyclic end product. The biological role of this enzyme is unknown but it is likely to function in some aspects of cellular RNA processing. The sequence is that of RNA 3'-terminal phosphate cyclase (rtcA) from Pyrococcus abyssi (strain GE5 / Orsay).